We begin with the raw amino-acid sequence, 572 residues long: MTEKIVLPPQSGKPSDVERIKTESNYLRGTLERTMNDPLSSGIPEDDNRLMKFHGSYLQDDRDLRNERQRQKLEPAYQFMVRVRTPGGAATPAQWLVMDEMARKYGNGSLKLTTRQAFQVHGILKWNVKKYMQEINEVLLDSLAACGDVNRNVMCNVNPNQSALHEEVYNWSAKLSEHLLPRTRAYHELWLDGEKVIDSQDDEIEPIYGAQYLPRKFKIAIAIPPSNDVDVFSQDIGLIAIVEDEKLIGFNVAVGGGMGMTHGDHATYPQLAREIGFITPDKLLETAEKIITIQRDYGNRSVRKNARFKYTIDARGLEWFNEELTRRLGWSIQEARPYTFERTGDEFGWIKGAEGKWHYTLFIQNGRIKDFQDYKLLTGLREIAKVHTGDFRLTPNQNLMISNVTPQKKKKIAAIIEQYKLTDGAHYSALRRNSIACVSLPTCGLAMAEAERYLPSLITKIETIIDETGLNDTEIVIRMSGCPNGCSRAAMAEIGFIGKGPGKYNLYLGASFTGNRLNKIYRENIGEEEILAELRPILVHYAKERLVGEHFGDFVIRAGYVTAVYDGREFHV.

Residues C437, C443, C482, and C486 each contribute to the [4Fe-4S] cluster site. C486 lines the siroheme pocket.

This sequence belongs to the nitrite and sulfite reductase 4Fe-4S domain family. In terms of assembly, alpha(8)-beta(8). The alpha component is a flavoprotein, the beta component is a hemoprotein. Siroheme is required as a cofactor. [4Fe-4S] cluster serves as cofactor.

It catalyses the reaction hydrogen sulfide + 3 NADP(+) + 3 H2O = sulfite + 3 NADPH + 4 H(+). The protein operates within sulfur metabolism; hydrogen sulfide biosynthesis; hydrogen sulfide from sulfite (NADPH route): step 1/1. Component of the sulfite reductase complex that catalyzes the 6-electron reduction of sulfite to sulfide. This is one of several activities required for the biosynthesis of L-cysteine from sulfate. The polypeptide is Sulfite reductase [NADPH] hemoprotein beta-component (Lysinibacillus sphaericus (strain C3-41)).